Here is a 120-residue protein sequence, read N- to C-terminus: NAD(P)H-quinone oxidoreductase subunit 3, chloroplastic (120 aa).

Transmembrane regions (helical) follow at residues 9–29, 64–84, and 88–108; these read IFWA…LISG, MFAL…PWAM, and VLGV…IVGS.

This sequence belongs to the complex I subunit 3 family. In terms of assembly, NDH is composed of at least 16 different subunits, 5 of which are encoded in the nucleus.

The protein resides in the plastid. Its subcellular location is the chloroplast thylakoid membrane. The enzyme catalyses a plastoquinone + NADH + (n+1) H(+)(in) = a plastoquinol + NAD(+) + n H(+)(out). It carries out the reaction a plastoquinone + NADPH + (n+1) H(+)(in) = a plastoquinol + NADP(+) + n H(+)(out). NDH shuttles electrons from NAD(P)H:plastoquinone, via FMN and iron-sulfur (Fe-S) centers, to quinones in the photosynthetic chain and possibly in a chloroplast respiratory chain. The immediate electron acceptor for the enzyme in this species is believed to be plastoquinone. Couples the redox reaction to proton translocation, and thus conserves the redox energy in a proton gradient. The sequence is that of NAD(P)H-quinone oxidoreductase subunit 3, chloroplastic from Gossypium hirsutum (Upland cotton).